Here is a 256-residue protein sequence, read N- to C-terminus: tRNA (guanine-N(1)-)-methyltransferase (256 aa).

Residues G113 and 132–137 each bind S-adenosyl-L-methionine; that span reads VGDYVL.

Belongs to the RNA methyltransferase TrmD family. As to quaternary structure, homodimer.

It is found in the cytoplasm. The catalysed reaction is guanosine(37) in tRNA + S-adenosyl-L-methionine = N(1)-methylguanosine(37) in tRNA + S-adenosyl-L-homocysteine + H(+). Specifically methylates guanosine-37 in various tRNAs. In Coprothermobacter proteolyticus (strain ATCC 35245 / DSM 5265 / OCM 4 / BT), this protein is tRNA (guanine-N(1)-)-methyltransferase.